The following is a 315-amino-acid chain: Olfactory receptor 5M1 (315 aa).

At 1–25 the chain is on the extracellular side; sequence MFSPNHTIVTEFILLGLTDDPVLEK. Asn5 carries an N-linked (GlcNAc...) asparagine glycan. A helical transmembrane segment spans residues 26–46; the sequence is ILFGVFLAIYLITLAGNLCMI. Over 47–54 the chain is Cytoplasmic; that stretch reads LLIRTNSH. Residues 55 to 75 traverse the membrane as a helical segment; that stretch reads LQTPMYFFLGHLSFVDICYSS. Residues 76 to 99 lie on the Extracellular side of the membrane; sequence NVTPNMLHNFLSEQKTISYAGCFT. A disulfide bond links Cys97 and Cys189. A helical transmembrane segment spans residues 100–120; it reads QCLLFIALVITEFYILASMAL. The Cytoplasmic portion of the chain corresponds to 121–139; it reads DRYVAICSPLHYSSRMSKN. A helical membrane pass occupies residues 140–160; that stretch reads ICVCLVTIPYMYGFLSGFSQS. Residues 161-196 are Extracellular-facing; sequence LLTFHLSFCGSLEINHFYCADPPLIMLACSDTRVKK. A helical transmembrane segment spans residues 197–217; it reads MAMFVVAGFNLSSSLFIILLS. Residues 218-237 lie on the Cytoplasmic side of the membrane; that stretch reads YLFIFAAIFRIRSAEGRHKA. A helical transmembrane segment spans residues 238–258; that stretch reads FSTCASHLTIVTLFYGTLFCM. At 259–271 the chain is on the extracellular side; it reads YVRPPSEKSVEES. Residues 272-292 traverse the membrane as a helical segment; sequence KITAVFYTFLSPMLNPLIYSL. Residues 293 to 315 are Cytoplasmic-facing; that stretch reads RNTDVILAMQQMIRGKSFHKIAV.

The protein belongs to the G-protein coupled receptor 1 family.

Its subcellular location is the cell membrane. In terms of biological role, odorant receptor. The polypeptide is Olfactory receptor 5M1 (OR5M1) (Homo sapiens (Human)).